The chain runs to 182 residues: Receptor activity-modifying protein 2 (182 aa).

Residues Met-1–Thr-45 form the signal peptide. Over Ser-46 to Glu-150 the chain is Extracellular. Residues Asn-51, Asn-92, and Asn-137 are each glycosylated (N-linked (GlcNAc...) asparagine). Intrachain disulfides connect Cys-76/Cys-106 and Cys-91/Cys-138. Residues Asp-151 to Val-172 form a helical membrane-spanning segment. Residues Trp-173–Ala-182 lie on the Cytoplasmic side of the membrane.

Belongs to the RAMP family. Heterodimer of CALCRL and RAMP2; the interaction forms the receptor complex for adrenomedullin/ADM. Heterodimer of CALCR and RAMP2; interaction forms the AMYR2 receptor complex for calcitonin/CALC and amylin/IAPP.

Its subcellular location is the cell membrane. In terms of biological role, accessory protein that interacts with and modulates the function of G-protein coupled receptors including calcitonin gene-related peptide type 1 receptor (CALCRL) and calcitonin receptor (CALCR). Required for the transport of CALCRL to the plasma membrane. Together with CALCRL, form a receptor complex for adrenomedullin/ADM. Together with CALCR, act as a receptor complex for calcitonin/CT/CALC. Together with CALCR, also act as a receptor complex for amylin/IAPP. The sequence is that of Receptor activity-modifying protein 2 from Rattus norvegicus (Rat).